The primary structure comprises 858 residues: DNA mismatch repair protein MutS (858 aa).

Residue 618–625 (GPNMGGKS) coordinates ATP.

The protein belongs to the DNA mismatch repair MutS family.

Its function is as follows. This protein is involved in the repair of mismatches in DNA. It is possible that it carries out the mismatch recognition step. This protein has a weak ATPase activity. The chain is DNA mismatch repair protein MutS from Shewanella woodyi (strain ATCC 51908 / MS32).